The sequence spans 250 residues: PF03932 family protein CutC (250 aa).

Belongs to the CutC family.

It is found in the cytoplasm. The chain is PF03932 family protein CutC from Proteus mirabilis (strain HI4320).